The chain runs to 360 residues: Hyaluronan and proteoglycan link protein 3 (360 aa).

The first 17 residues, 1-17 (MGLLLLVPLLLLPGSYG), serve as a signal peptide directing secretion. In terms of domain architecture, Ig-like V-type spans 48–164 (KLVVETPEET…ESGLVELELR (117 aa)). 5 disulfides stabilise this stretch: Cys70/Cys146, Cys188/Cys259, Cys212/Cys233, Cys286/Cys356, and Cys311/Cys332. 2 consecutive Link domains span residues 166–261 (VVFP…FCFA) and 266–358 (GRVY…YCYR).

Belongs to the HAPLN family. In terms of tissue distribution, widely expressed with highest levels in spleen and placenta.

Its subcellular location is the secreted. The protein resides in the extracellular space. It localises to the extracellular matrix. Its function is as follows. May function in hyaluronic acid binding. The sequence is that of Hyaluronan and proteoglycan link protein 3 (HAPLN3) from Homo sapiens (Human).